The sequence spans 176 residues: NAD(P)H-quinone oxidoreductase subunit 6, chloroplastic (176 aa).

The next 5 membrane-spanning stretches (helical) occupy residues 10–30, 32–52, 63–83, 92–112, and 152–172; these read FILV…VFFT, TIFS…FYIL, LLIY…FMNG, VWTV…ISQI, and FFLP…GAIF.

The protein belongs to the complex I subunit 6 family. In terms of assembly, NDH is composed of at least 16 different subunits, 5 of which are encoded in the nucleus.

It localises to the plastid. Its subcellular location is the chloroplast thylakoid membrane. The catalysed reaction is a plastoquinone + NADH + (n+1) H(+)(in) = a plastoquinol + NAD(+) + n H(+)(out). The enzyme catalyses a plastoquinone + NADPH + (n+1) H(+)(in) = a plastoquinol + NADP(+) + n H(+)(out). Functionally, NDH shuttles electrons from NAD(P)H:plastoquinone, via FMN and iron-sulfur (Fe-S) centers, to quinones in the photosynthetic chain and possibly in a chloroplast respiratory chain. The immediate electron acceptor for the enzyme in this species is believed to be plastoquinone. Couples the redox reaction to proton translocation, and thus conserves the redox energy in a proton gradient. This is NAD(P)H-quinone oxidoreductase subunit 6, chloroplastic (ndhG) from Phaseolus vulgaris (Kidney bean).